A 120-amino-acid chain; its full sequence is SAGA-associated factor 11 (120 aa).

Low complexity predominate over residues Ser-40 to Asn-60. Residues Ser-40 to Ser-82 form a disordered region. The SGF11-type zinc finger occupies Phe-93–Cys-114.

This sequence belongs to the SGF11 family. As to quaternary structure, component of the 1.8 MDa SAGA transcription coactivator-HAT complex. SAGA is built of 5 distinct domains with specialized functions. Within the SAGA complex, SUS1, SGF11, SGF73 and UBP8 form an additional subcomplex of SAGA called the DUB module (deubiquitination module). Interacts directly with SGF73, SUS1 and UBP8.

It localises to the nucleus. In terms of biological role, functions as a component of the transcription regulatory histone acetylation (HAT) complex SAGA. At the promoters, SAGA is required for recruitment of the basal transcription machinery. It influences RNA polymerase II transcriptional activity through different activities such as TBP interaction and promoter selectivity, interaction with transcription activators, and chromatin modification through histone acetylation and deubiquitination. SAGA acetylates nucleosomal histone H3 to some extent (to form H3K9ac, H3K14ac, H3K18ac and H3K23ac). SAGA interacts with DNA via upstream activating sequences (UASs). Involved in transcriptional regulation of a subset of SAGA-regulated genes. Within the SAGA complex, participates in a subcomplex, that specifically deubiquitinates histones H2B. This is SAGA-associated factor 11 from Candida albicans (strain SC5314 / ATCC MYA-2876) (Yeast).